The sequence spans 309 residues: Porphobilinogen deaminase (309 aa).

Position 241 is an S-(dipyrrolylmethanemethyl)cysteine (cysteine 241).

Belongs to the HMBS family. Monomer. Dipyrromethane serves as cofactor.

It carries out the reaction 4 porphobilinogen + H2O = hydroxymethylbilane + 4 NH4(+). The protein operates within porphyrin-containing compound metabolism; protoporphyrin-IX biosynthesis; coproporphyrinogen-III from 5-aminolevulinate: step 2/4. Its function is as follows. Tetrapolymerization of the monopyrrole PBG into the hydroxymethylbilane pre-uroporphyrinogen in several discrete steps. In Bacillus cereus (strain AH820), this protein is Porphobilinogen deaminase.